The sequence spans 261 residues: Carbonic anhydrase 1 (261 aa).

A2 is modified (N-acetylalanine). The Alpha-carbonic anhydrase domain maps to 4–261; the sequence is PDWGYDGENG…LNGRTVKASF (258 aa). H65 functions as the Proton donor/acceptor in the catalytic mechanism. Zn(2+) is bound by residues H95, H97, and H120. Residues T200 and 200–201 contribute to the substrate site; that span reads TH.

Belongs to the alpha-carbonic anhydrase family. It depends on Zn(2+) as a cofactor.

It is found in the cytoplasm. It catalyses the reaction hydrogencarbonate + H(+) = CO2 + H2O. The enzyme catalyses urea = cyanamide + H2O. Its activity is regulated as follows. Inhibited by acetazolamide. Catalyzes the reversible hydration of carbon dioxide. Can hydrate cyanamide to urea. The chain is Carbonic anhydrase 1 (CA1) from Bos taurus (Bovine).